The primary structure comprises 98 residues: Feather keratin 2 (98 aa).

At Ser2 the chain carries N-acetylserine.

It belongs to the avian keratin family. In terms of assembly, the avian keratins (F-ker, S-ker, C-ker and B-ker) are a complex mixture of very similar polypeptides.

The sequence is that of Feather keratin 2 from Gallus gallus (Chicken).